A 448-amino-acid chain; its full sequence is Trigger factor (448 aa).

In terms of domain architecture, PPIase FKBP-type spans Gly-167–Pro-253.

It belongs to the FKBP-type PPIase family. Tig subfamily.

It is found in the cytoplasm. The catalysed reaction is [protein]-peptidylproline (omega=180) = [protein]-peptidylproline (omega=0). Its function is as follows. Involved in protein export. Acts as a chaperone by maintaining the newly synthesized protein in an open conformation. Functions as a peptidyl-prolyl cis-trans isomerase. The protein is Trigger factor of Borrelia duttonii (strain Ly).